We begin with the raw amino-acid sequence, 44 residues long: Thrombin-like enzyme F202 (44 aa).

The 44-residue stretch at 1–44 (VVGGDECNINEHRFLVALYANSSLLCGGTLINQEWVLIAAHCDR) folds into the Peptidase S1 domain. Cys26 and Cys42 are disulfide-bonded. The Charge relay system role is filled by His41.

Belongs to the peptidase S1 family. Snake venom subfamily. As to quaternary structure, monomer. In terms of processing, contains 6 disulfide bonds. In terms of tissue distribution, expressed by the venom gland.

The protein localises to the secreted. Its activity is regulated as follows. Enzyme activity is markedly inhibited by TLCK and PMSF, and moderately by SBTi. Platelet aggregating activity is strongly inhibited by TLCK. In terms of biological role, thrombin-like snake venom serine protease that coagulates fibrinogen by inducing a fast degradation of the alpha chain (FGA) from human citrated plasma, and a slow degradation of beta chain (FGB). Potently induces platelet aggregation in both platelet rich plasma and washed platelet preparations in a concentration-dependent fashion. Shows amidolytic activities. The sequence is that of Thrombin-like enzyme F202 from Crotalus durissus cascavella (Northeastern Brazilian rattlesnake).